The primary structure comprises 120 residues: MFLLYEYDIFWAFLIISSLIPILAFLISGILAPISKGPEKLSSYESGIEPMGDAWLQFRIRYYMFALVFVVFDVETVFLYPWAMSFDVLGVSVFIEALIFVLILIVGLVYAWRKGALEWS.

The next 3 membrane-spanning stretches (helical) occupy residues 9-29 (IFWA…LISG), 64-84 (MFAL…PWAM), and 88-108 (VLGV…IVGL).

It belongs to the complex I subunit 3 family. In terms of assembly, NDH is composed of at least 16 different subunits, 5 of which are encoded in the nucleus.

It is found in the plastid. The protein resides in the chloroplast thylakoid membrane. The catalysed reaction is a plastoquinone + NADH + (n+1) H(+)(in) = a plastoquinol + NAD(+) + n H(+)(out). It catalyses the reaction a plastoquinone + NADPH + (n+1) H(+)(in) = a plastoquinol + NADP(+) + n H(+)(out). In terms of biological role, NDH shuttles electrons from NAD(P)H:plastoquinone, via FMN and iron-sulfur (Fe-S) centers, to quinones in the photosynthetic chain and possibly in a chloroplast respiratory chain. The immediate electron acceptor for the enzyme in this species is believed to be plastoquinone. Couples the redox reaction to proton translocation, and thus conserves the redox energy in a proton gradient. The sequence is that of NAD(P)H-quinone oxidoreductase subunit 3, chloroplastic from Lupinus luteus (European yellow lupine).